A 194-amino-acid chain; its full sequence is [Ribosomal protein uS5]-alanine N-acetyltransferase (194 aa).

The N-acetyltransferase domain occupies 18-188 (LVVRLVHDRD…DHVLTALTTP (171 aa)).

The protein belongs to the acetyltransferase family. RimJ subfamily.

The protein localises to the cytoplasm. It catalyses the reaction N-terminal L-alanyl-[ribosomal protein uS5] + acetyl-CoA = N-terminal N(alpha)-acetyl-L-alanyl-[ribosomal protein uS5] + CoA + H(+). Its function is as follows. Acetylates the N-terminal alanine of ribosomal protein uS5. The protein is [Ribosomal protein uS5]-alanine N-acetyltransferase (rimJ) of Shigella flexneri.